We begin with the raw amino-acid sequence, 355 residues long: UDP-3-O-acylglucosamine N-acyltransferase (355 aa).

His258 (proton acceptor) is an active-site residue.

Belongs to the transferase hexapeptide repeat family. LpxD subfamily. In terms of assembly, homotrimer.

It carries out the reaction a UDP-3-O-[(3R)-3-hydroxyacyl]-alpha-D-glucosamine + a (3R)-hydroxyacyl-[ACP] = a UDP-2-N,3-O-bis[(3R)-3-hydroxyacyl]-alpha-D-glucosamine + holo-[ACP] + H(+). The protein operates within bacterial outer membrane biogenesis; LPS lipid A biosynthesis. Its function is as follows. Catalyzes the N-acylation of UDP-3-O-acylglucosamine using 3-hydroxyacyl-ACP as the acyl donor. Is involved in the biosynthesis of lipid A, a phosphorylated glycolipid that anchors the lipopolysaccharide to the outer membrane of the cell. This chain is UDP-3-O-acylglucosamine N-acyltransferase, found in Bradyrhizobium diazoefficiens (strain JCM 10833 / BCRC 13528 / IAM 13628 / NBRC 14792 / USDA 110).